A 298-amino-acid polypeptide reads, in one-letter code: Aspartate carbamoyltransferase catalytic subunit (298 aa).

Positions 50 and 51 each coordinate carbamoyl phosphate. L-aspartate is bound at residue Lys79. Carbamoyl phosphate-binding residues include Arg100, His128, and Gln131. Residues Arg160 and Arg221 each contribute to the L-aspartate site. Carbamoyl phosphate is bound by residues Leu260 and Pro261.

It belongs to the aspartate/ornithine carbamoyltransferase superfamily. ATCase family. As to quaternary structure, heterooligomer of catalytic and regulatory chains.

The enzyme catalyses carbamoyl phosphate + L-aspartate = N-carbamoyl-L-aspartate + phosphate + H(+). It functions in the pathway pyrimidine metabolism; UMP biosynthesis via de novo pathway; (S)-dihydroorotate from bicarbonate: step 2/3. Catalyzes the condensation of carbamoyl phosphate and aspartate to form carbamoyl aspartate and inorganic phosphate, the committed step in the de novo pyrimidine nucleotide biosynthesis pathway. This Methanospirillum hungatei JF-1 (strain ATCC 27890 / DSM 864 / NBRC 100397 / JF-1) protein is Aspartate carbamoyltransferase catalytic subunit.